The following is a 559-amino-acid chain: Chaperonin GroEL 1 (559 aa).

ATP contacts are provided by residues 29–32 (TIGP), 86–90 (DGTTT), Gly-413, 476–478 (NAL), and Asp-492. The interval 521–541 (KPEPPAPAPAGDGDPMGGMGG) is disordered.

The protein belongs to the chaperonin (HSP60) family. As to quaternary structure, forms a cylinder of 14 subunits composed of two heptameric rings stacked back-to-back. Interacts with the co-chaperonin GroES.

It is found in the cytoplasm. It catalyses the reaction ATP + H2O + a folded polypeptide = ADP + phosphate + an unfolded polypeptide.. Together with its co-chaperonin GroES, plays an essential role in assisting protein folding. The GroEL-GroES system forms a nano-cage that allows encapsulation of the non-native substrate proteins and provides a physical environment optimized to promote and accelerate protein folding. This is Chaperonin GroEL 1 from Synechococcus sp. (strain CC9605).